The sequence spans 316 residues: Coiled-coil domain-containing protein 42 (316 aa).

Coiled coils occupy residues 43–151 and 182–236; these read RLLE…EYSI and HHDL…SDVI.

It belongs to the CFAP73 family. Interacts with ODF1 and ODF2. Interacts with CCDC38. Interacts with CCDC146. Interacts with CFAP53.

It localises to the cytoplasm. The protein localises to the perinuclear region. Its subcellular location is the cytoskeleton. The protein resides in the cell projection. It is found in the cilium. It localises to the flagellum. The protein localises to the microtubule organizing center. Its subcellular location is the centrosome. Functionally, essential for male fertility. Required for sperm development. In Bos taurus (Bovine), this protein is Coiled-coil domain-containing protein 42.